Here is a 639-residue protein sequence, read N- to C-terminus: DNA mismatch repair protein MutL (639 aa).

The tract at residues 336–392 is disordered; it reads SAHDDPTPAISGAARDEEPRGVENRASAGENRFNRPASSPVASAPRPAHVAAPRMPA. Residues 349–358 show a composition bias toward basic and acidic residues; sequence ARDEEPRGVE. Residues 370 to 392 are compositionally biased toward low complexity; sequence RPASSPVASAPRPAHVAAPRMPA.

Belongs to the DNA mismatch repair MutL/HexB family.

Functionally, this protein is involved in the repair of mismatches in DNA. It is required for dam-dependent methyl-directed DNA mismatch repair. May act as a 'molecular matchmaker', a protein that promotes the formation of a stable complex between two or more DNA-binding proteins in an ATP-dependent manner without itself being part of a final effector complex. The chain is DNA mismatch repair protein MutL from Edwardsiella ictaluri (strain 93-146).